The chain runs to 157 residues: S-ribosylhomocysteine lyase (157 aa).

Fe cation contacts are provided by histidine 54, histidine 58, and cysteine 126.

The protein belongs to the LuxS family. Homodimer. It depends on Fe cation as a cofactor.

The catalysed reaction is S-(5-deoxy-D-ribos-5-yl)-L-homocysteine = (S)-4,5-dihydroxypentane-2,3-dione + L-homocysteine. Involved in the synthesis of autoinducer 2 (AI-2) which is secreted by bacteria and is used to communicate both the cell density and the metabolic potential of the environment. The regulation of gene expression in response to changes in cell density is called quorum sensing. Catalyzes the transformation of S-ribosylhomocysteine (RHC) to homocysteine (HC) and 4,5-dihydroxy-2,3-pentadione (DPD). This is S-ribosylhomocysteine lyase from Bacillus anthracis (strain A0248).